Consider the following 509-residue polypeptide: FAD-linked oxidoreductase anuG (509 aa).

The signal sequence occupies residues 1-21 (MVQISNVWGFGLAIMASLAAA). An FAD-binding PCMH-type domain is found at 75–246 (YAAPKFTVVV…TSFEMSIYPT (172 aa)).

Belongs to the oxygen-dependent FAD-linked oxidoreductase family. The cofactor is FAD.

The enzyme catalyses (2S,9S)-annullatin H + 2 A = (2S,9S)-annullatin D + 2 AH2. It functions in the pathway secondary metabolite biosynthesis. Its function is as follows. Cytochrome P450 monooxygenase; part of the gene cluster that mediates the biosynthesis of annullatin D, an alkylated aromatic polyketide with a fused dihydrobenzofuran lactone ring system that exhibits potent agonistic activities toward the cannabinoid receptors. Within the pathway, anuG is responsible for the five-member lactone ring formation in (2S, 9S)-annullatin D via oxidative lactonization between the two hydroxyl groups. The annullatin backbone 2-hydroxymethyl-3-pentylphenol is assembled from one acetyl-CoA starter unit and 5 malonyl-CoA elongation units by cooperation of the highly reducing polyketide synthase anuA, the short-chain dehydrogenase anuB and the oxidoreductase anuC, before being hydroxylated at the C-5 alkyl chain by the cytochrome P450 monooxygenase anuE to form (8S)-annullatin E. The prenyltransferase anuH subsequently installs one isoprenyl group at the benzene ring to form (8S)-annullatin J. Enzymatic or nonenzymatic dihydro-benzofuran ring formation between the prenyl and the phenolic hydroxyl groups in (8S)-annullatin J results in two diastereomers (2S,9S)-annullatin H and compound 12. The intermediate (2S,9S)-annullatin H is then converted to (2S,9S)-annullatin D by the FAD-linked oxidoreductase anuG-catalyzed five-member lactone ring formation. The isomer 12 acts as a substrate for the short-chain dehydrogenase anuF and is oxidized to (2R)-annullatin F, which is subsequently acetylated by an acetyltransferase leading to (2R)-annullatin G formation. The remaining enzymes identified within the cluster, anuD, anuI and anuJ, seem not to be involved in annullatin biosynthesis. This Penicillium roqueforti (strain FM164) protein is FAD-linked oxidoreductase anuG.